A 193-amino-acid chain; its full sequence is Recombination protein RecR (193 aa).

Residues 61–76 (CSSCNALSESEVCEIC) form a C4-type zinc finger. The region spanning 84-170 (SQLCMVLHPR…TFTKIAQGVP (87 aa)) is the Toprim domain.

Belongs to the RecR family.

In terms of biological role, may play a role in DNA repair. It seems to be involved in an RecBC-independent recombinational process of DNA repair. It may act with RecF and RecO. The chain is Recombination protein RecR from Helicobacter pylori (strain G27).